Consider the following 676-residue polypeptide: DNA ligase (676 aa).

The span at 1-10 (MTQAHHDDAG) shows a compositional bias: basic and acidic residues. The tract at residues 1-23 (MTQAHHDDAGARNALQGGLATDP) is disordered. Residues 52–56 (DAAFD) and 95–96 (SL) each bind NAD(+). Lys148 serves as the catalytic N6-AMP-lysine intermediate. Positions 169, 203, and 330 each coordinate NAD(+). Zn(2+)-binding residues include Cys420, Cys423, Cys436, and Cys441. Residues 593–676 (EAEGPLAGLT…DKLIAERRGG (84 aa)) enclose the BRCT domain.

The protein belongs to the NAD-dependent DNA ligase family. LigA subfamily. Mg(2+) is required as a cofactor. Requires Mn(2+) as cofactor.

The catalysed reaction is NAD(+) + (deoxyribonucleotide)n-3'-hydroxyl + 5'-phospho-(deoxyribonucleotide)m = (deoxyribonucleotide)n+m + AMP + beta-nicotinamide D-nucleotide.. Its function is as follows. DNA ligase that catalyzes the formation of phosphodiester linkages between 5'-phosphoryl and 3'-hydroxyl groups in double-stranded DNA using NAD as a coenzyme and as the energy source for the reaction. It is essential for DNA replication and repair of damaged DNA. The polypeptide is DNA ligase (Sorangium cellulosum (strain So ce56) (Polyangium cellulosum (strain So ce56))).